A 67-amino-acid chain; its full sequence is Sodium channel neurotoxin MeuNaTxalpha-10 (67 aa).

Positions 2–66 constitute an LCN-type CS-alpha/beta domain; sequence RDGYIAKPHN…VPIRIPGKCH (65 aa). 4 disulfides stabilise this stretch: Cys12-Cys65, Cys16-Cys38, Cys24-Cys48, and Cys28-Cys50. Position 67 (Arg67) is a propeptide, removed by a carboxypeptidase.

Belongs to the long (4 C-C) scorpion toxin superfamily. Sodium channel inhibitor family. Alpha subfamily. Expressed by the venom gland.

It localises to the secreted. In terms of biological role, alpha toxins bind voltage-independently at site-3 of sodium channels (Nav) and inhibit the inactivation of the activated channels, thereby blocking neuronal transmission. This is Sodium channel neurotoxin MeuNaTxalpha-10 from Mesobuthus eupeus (Lesser Asian scorpion).